We begin with the raw amino-acid sequence, 252 residues long: Expansin-A12 (252 aa).

An N-terminal signal peptide occupies residues 1 to 23 (MDMKGTYLVTVILLVSTLSVGMC). In terms of domain architecture, Expansin-like EG45 spans 45 to 156 (GGACGYDNPY…RRVGCKRRGG (112 aa)). In terms of domain architecture, Expansin-like CBD spans 166 to 246 (NFNMVMISNV…SWWFGQTFSS (81 aa)).

It belongs to the expansin family. Expansin A subfamily.

The protein localises to the secreted. Its subcellular location is the cell wall. It localises to the membrane. Causes loosening and extension of plant cell walls by disrupting non-covalent bonding between cellulose microfibrils and matrix glucans. No enzymatic activity has been found. The protein is Expansin-A12 (EXPA12) of Arabidopsis thaliana (Mouse-ear cress).